The sequence spans 277 residues: MENSENSVDAKSIKNSETKIFHGSKSMDSGIYMDNSYKMDYPEMGLCIIINNKNFHESTGMPSRSGTDVDAANLRETFTNLKYEVRNKNDLTREQIVALLDSVSREDHSKRSSFICVLLSHGEEGIIYGTNGPVDLKKLTGFFRGDYCRSLTGKPKLFIIQACRGTELDCGIETDSGTEDDIACQKIPVEADFLYAYSTAPGYYSWRNSKDGSWFIQSLCSMLRLYAHELEFMHILTRVNRKVATEFESFSLDSAFHGKKQIPCIVSMLTKELYFYH.

The residue at position 1 (Met1) is an N-acetylmethionine. 2 propeptides span residues 1–9 (MENSENSVD) and 10–28 (AKSI…KSMD). The residue at position 11 (Lys11) is an N6-acetyllysine. The residue at position 26 (Ser26) is a Phosphoserine. Residues His121 and Cys163 contribute to the active site. Cys163 carries the post-translational modification S-nitrosocysteine; in inhibited form.

This sequence belongs to the peptidase C14A family. Heterotetramer that consists of two anti-parallel arranged heterodimers, each one formed by a 17 kDa (p17) and a 12 kDa (p12) subunit. Interacts with BIRC6/bruce. Cleavage by granzyme B, caspase-6, caspase-8 and caspase-10 generates the two active subunits. Additional processing of the propeptides is likely due to the autocatalytic activity of the activated protease. Active heterodimers between the small subunit of caspase-7 protease and the large subunit of caspase-3 also occur and vice versa. Post-translationally, S-nitrosylated on its catalytic site cysteine in unstimulated cell lines and denitrosylated upon activation of the Fas apoptotic pathway, associated with an increase in intracellular caspase activity. Fas therefore activates caspase-3 not only by inducing the cleavage of the caspase zymogen to its active subunits, but also by stimulating the denitrosylation of its active site thiol. In terms of processing, ubiquitinated by BIRC6; this activity is inhibited by DIABLO/SMAC.

The protein localises to the cytoplasm. It catalyses the reaction Strict requirement for an Asp residue at positions P1 and P4. It has a preferred cleavage sequence of Asp-Xaa-Xaa-Asp-|- with a hydrophobic amino-acid residue at P2 and a hydrophilic amino-acid residue at P3, although Val or Ala are also accepted at this position.. With respect to regulation, inhibited by BIRC6; following inhibition of BIRC6-caspase binding by DIABLO/SMAC, BIRC6 is subjected to caspase cleavage, leading to an increase in active caspases. Its function is as follows. Involved in the activation cascade of caspases responsible for apoptosis execution. At the onset of apoptosis, it proteolytically cleaves poly(ADP-ribose) polymerase PARP1 at a '216-Asp-|-Gly-217' bond. Cleaves and activates sterol regulatory element binding proteins (SREBPs) between the basic helix-loop-helix leucine zipper domain and the membrane attachment domain. Cleaves and activates caspase-6, -7 and -9 (CASP6, CASP7 and CASP9, respectively). Cleaves and inactivates interleukin-18 (IL18). Triggers cell adhesion in sympathetic neurons through RET cleavage. Cleaves IL-1 beta between an Asp and an Ala, releasing the mature cytokine which is involved in a variety of inflammatory processes. Cleaves and inhibits serine/threonine-protein kinase AKT1 in response to oxidative stress. Acts as an inhibitor of type I interferon production during virus-induced apoptosis by mediating cleavage of antiviral proteins CGAS, IRF3 and MAVS, thereby preventing cytokine overproduction. Also involved in pyroptosis by mediating cleavage and activation of gasdermin-E (GSDME). Cleaves XRCC4 and phospholipid scramblase proteins XKR4, XKR8 and XKR9, leading to promote phosphatidylserine exposure on apoptotic cell surface. Cleaves BIRC6 following inhibition of BIRC6-caspase binding by DIABLO/SMAC. In Felis catus (Cat), this protein is Caspase-3 (CASP3).